The sequence spans 141 residues: HTH-type transcriptional repressor NsrR (141 aa).

Residues 2-129 form the HTH rrf2-type domain; it reads QLTSFTDYGL…DNYTLADLVE (128 aa). A DNA-binding region (H-T-H motif) is located at residues 28 to 51; the sequence is ISEVTDVYGVSRNHMVKIINQLSR. Cysteine 91, cysteine 96, and cysteine 102 together coordinate [2Fe-2S] cluster.

The cofactor is [2Fe-2S] cluster.

Nitric oxide-sensitive repressor of genes involved in protecting the cell against nitrosative stress. May require iron for activity. This chain is HTH-type transcriptional repressor NsrR, found in Escherichia fergusonii (strain ATCC 35469 / DSM 13698 / CCUG 18766 / IAM 14443 / JCM 21226 / LMG 7866 / NBRC 102419 / NCTC 12128 / CDC 0568-73).